The chain runs to 510 residues: Probable serine/threonine-protein kinase 2 (510 aa).

The Protein kinase domain occupies 111 to 364 (YVLNKKIGKG…ALQALGHQWF (254 aa)). ATP is bound by residues 117–125 (IGKGSFSTA) and Lys-140. The active-site Proton acceptor is Asp-230. Positions 408–428 (NDDIYNNNNNNNQLDPNKNHK) are disordered.

Belongs to the protein kinase superfamily. Ser/Thr protein kinase family.

Its subcellular location is the membrane. The enzyme catalyses L-seryl-[protein] + ATP = O-phospho-L-seryl-[protein] + ADP + H(+). The catalysed reaction is L-threonyl-[protein] + ATP = O-phospho-L-threonyl-[protein] + ADP + H(+). The chain is Probable serine/threonine-protein kinase 2 (PK2) from Plasmodium falciparum (isolate K1 / Thailand).